Reading from the N-terminus, the 308-residue chain is MLFKNRHVISMKDFSREEIDHVLDTAEKLEPVARGEERSRLLDGKIVSLLFFEPSTRTRLSFEAATQRLGGQALNLGSVEASSVMKGENLADTIRVISKYADLIVLRHPLDGSARMAAEFASVPVINGGDGSVHHPTQTFLDLYTIRRESHLEDLRIAMAGDLKYGRTVHSLCHALSLYGAEMTFVSPPELRMPPEIVRDLKKQKIRVKETDSLEEIIGDVEVLYMTRVQRERFPDPEEYEKVKNRLKVTGDLLKAADPELKVLHPLPRVNEIAPEVDATPHACYFEQAFYGVPIRMALLALAMGVIE.

Carbamoyl phosphate contacts are provided by Arg57 and Thr58. Lys86 is an L-aspartate binding site. Carbamoyl phosphate-binding residues include Arg107, His135, and Gln138. L-aspartate contacts are provided by Arg167 and Arg228. Carbamoyl phosphate-binding residues include Leu267 and Pro268.

It belongs to the aspartate/ornithine carbamoyltransferase superfamily. ATCase family. As to quaternary structure, heterooligomer of catalytic and regulatory chains.

It catalyses the reaction carbamoyl phosphate + L-aspartate = N-carbamoyl-L-aspartate + phosphate + H(+). It participates in pyrimidine metabolism; UMP biosynthesis via de novo pathway; (S)-dihydroorotate from bicarbonate: step 2/3. Catalyzes the condensation of carbamoyl phosphate and aspartate to form carbamoyl aspartate and inorganic phosphate, the committed step in the de novo pyrimidine nucleotide biosynthesis pathway. This chain is Aspartate carbamoyltransferase catalytic subunit, found in Methanosarcina acetivorans (strain ATCC 35395 / DSM 2834 / JCM 12185 / C2A).